The following is a 166-amino-acid chain: Putative tRNA (cytidine(34)-2'-O)-methyltransferase (166 aa).

S-adenosyl-L-methionine-binding residues include Leu83, Gly109, Ile130, and Ser138.

This sequence belongs to the class IV-like SAM-binding methyltransferase superfamily. RNA methyltransferase TrmH family. TrmL subfamily.

It localises to the cytoplasm. The catalysed reaction is cytidine(34) in tRNA + S-adenosyl-L-methionine = 2'-O-methylcytidine(34) in tRNA + S-adenosyl-L-homocysteine + H(+). It catalyses the reaction 5-carboxymethylaminomethyluridine(34) in tRNA(Leu) + S-adenosyl-L-methionine = 5-carboxymethylaminomethyl-2'-O-methyluridine(34) in tRNA(Leu) + S-adenosyl-L-homocysteine + H(+). In terms of biological role, could methylate the ribose at the nucleotide 34 wobble position in tRNA. This Mycoplasma genitalium (strain ATCC 33530 / DSM 19775 / NCTC 10195 / G37) (Mycoplasmoides genitalium) protein is Putative tRNA (cytidine(34)-2'-O)-methyltransferase.